A 546-amino-acid chain; its full sequence is Chaperonin GroEL 4 (546 aa).

Residues 30–33 (TLGP), Lys-51, 87–91 (DGTTT), Gly-415, and Asp-496 contribute to the ATP site.

This sequence belongs to the chaperonin (HSP60) family. Forms a cylinder of 14 subunits composed of two heptameric rings stacked back-to-back. Interacts with the co-chaperonin GroES.

The protein resides in the cytoplasm. The enzyme catalyses ATP + H2O + a folded polypeptide = ADP + phosphate + an unfolded polypeptide.. Its function is as follows. Together with its co-chaperonin GroES, plays an essential role in assisting protein folding. The GroEL-GroES system forms a nano-cage that allows encapsulation of the non-native substrate proteins and provides a physical environment optimized to promote and accelerate protein folding. This chain is Chaperonin GroEL 4, found in Bradyrhizobium sp. (strain BTAi1 / ATCC BAA-1182).